The following is a 456-amino-acid chain: tRNA modification GTPase MnmE (456 aa).

(6S)-5-formyl-5,6,7,8-tetrahydrofolate contacts are provided by R24, E81, and K120. In terms of domain architecture, TrmE-type G spans 216-379 (GMTVVIAGRP…LRDHLKACMG (164 aa)). A K(+)-binding site is contributed by N226. GTP contacts are provided by residues 226–231 (NAGKSS), 245–251 (TEIAGTT), 270–273 (DTAG), and 335–338 (NKAD). S230 contributes to the Mg(2+) binding site. Positions 245, 247, and 250 each coordinate K(+). T251 serves as a coordination point for Mg(2+). K456 contacts (6S)-5-formyl-5,6,7,8-tetrahydrofolate.

This sequence belongs to the TRAFAC class TrmE-Era-EngA-EngB-Septin-like GTPase superfamily. TrmE GTPase family. Homodimer. Heterotetramer of two MnmE and two MnmG subunits. K(+) is required as a cofactor.

It localises to the cytoplasm. Its function is as follows. Exhibits a very high intrinsic GTPase hydrolysis rate. Involved in the addition of a carboxymethylaminomethyl (cmnm) group at the wobble position (U34) of certain tRNAs, forming tRNA-cmnm(5)s(2)U34. The polypeptide is tRNA modification GTPase MnmE (Pseudomonas fluorescens (strain Pf0-1)).